The chain runs to 101 residues: Iron-sulfur cluster assembly protein CyaY (101 aa).

Belongs to the frataxin family.

In terms of biological role, involved in iron-sulfur (Fe-S) cluster assembly. May act as a regulator of Fe-S biogenesis. This Haemophilus influenzae (strain PittEE) protein is Iron-sulfur cluster assembly protein CyaY.